A 607-amino-acid polypeptide reads, in one-letter code: Elongation factor 4 (607 aa).

A tr-type G domain is found at 11–193 (ENIRNFSIIA…KIVEVVPPPE (183 aa)). GTP-binding positions include 23-28 (DHGKST) and 140-143 (NKID).

Belongs to the TRAFAC class translation factor GTPase superfamily. Classic translation factor GTPase family. LepA subfamily.

Its subcellular location is the cell membrane. It catalyses the reaction GTP + H2O = GDP + phosphate + H(+). Functionally, required for accurate and efficient protein synthesis under certain stress conditions. May act as a fidelity factor of the translation reaction, by catalyzing a one-codon backward translocation of tRNAs on improperly translocated ribosomes. Back-translocation proceeds from a post-translocation (POST) complex to a pre-translocation (PRE) complex, thus giving elongation factor G a second chance to translocate the tRNAs correctly. Binds to ribosomes in a GTP-dependent manner. The chain is Elongation factor 4 from Staphylococcus haemolyticus (strain JCSC1435).